Consider the following 311-residue polypeptide: Putative ribose-phosphate pyrophosphokinase 2 (311 aa).

ATP is bound by residues 38–40 (DGE) and 97–98 (RQ). Residues His131 and Asp171 each coordinate Mg(2+). A D-ribose 5-phosphate-binding site is contributed by Asp219.

This sequence belongs to the ribose-phosphate pyrophosphokinase family. Class I subfamily. Homohexamer. Mg(2+) serves as cofactor.

It is found in the cytoplasm. The catalysed reaction is D-ribose 5-phosphate + ATP = 5-phospho-alpha-D-ribose 1-diphosphate + AMP + H(+). The protein operates within metabolic intermediate biosynthesis; 5-phospho-alpha-D-ribose 1-diphosphate biosynthesis; 5-phospho-alpha-D-ribose 1-diphosphate from D-ribose 5-phosphate (route I): step 1/1. Functionally, involved in the biosynthesis of the central metabolite phospho-alpha-D-ribosyl-1-pyrophosphate (PRPP) via the transfer of pyrophosphoryl group from ATP to 1-hydroxyl of ribose-5-phosphate (Rib-5-P). The chain is Putative ribose-phosphate pyrophosphokinase 2 from Listeria monocytogenes serotype 4b (strain F2365).